The chain runs to 1187 residues: Serine/threonine-protein kinase SIK3 homolog (1187 aa).

Over residues 1 to 15 (MAAVSSGAAAAAGIP) the composition is skewed to low complexity. The segment at 1 to 41 (MAAVSSGAAAAAGIPNPNPNRERPQQQQQQQPASAALHPVA) is disordered. The 252-residue stretch at 59–310 (YEMERTIGKG…MEQICKNKWM (252 aa)) folds into the Protein kinase domain. ATP-binding positions include 65-73 (IGKGNFAVV) and lysine 88. Residue aspartate 181 is the Proton acceptor of the active site. Threonine 214 bears the Phosphothreonine mark. Serine 218 is subject to Phosphoserine. The UBA domain occupies 337–377 (LINEQVLMAMAEMGFDRERTLQSLHADSYDHYSATYSLLSD). Disordered regions lie at residues 548-587 (LKRPRGQSPLVTSPHPIPAVAPVDEEGSDAEPDPEAVQRS), 697-776 (IQPS…PPGS), and 1060-1092 (CADAADAGMESDHNGYGSRSTQSDSYRPRGALQ). The span at 570 to 581 (VDEEGSDAEPDP) shows a compositional bias: acidic residues. Polar residues predominate over residues 739–749 (VQYQHGSALYQ).

This sequence belongs to the protein kinase superfamily. CAMK Ser/Thr protein kinase family. SNF1 subfamily. Mg(2+) serves as cofactor.

The enzyme catalyses L-seryl-[protein] + ATP = O-phospho-L-seryl-[protein] + ADP + H(+). It carries out the reaction L-threonyl-[protein] + ATP = O-phospho-L-threonyl-[protein] + ADP + H(+). The chain is Serine/threonine-protein kinase SIK3 homolog from Danio rerio (Zebrafish).